Reading from the N-terminus, the 444-residue chain is Tubulin beta chain (444 aa).

Glutamine 11, glutamate 69, serine 138, glycine 142, threonine 143, glycine 144, asparagine 204, and asparagine 226 together coordinate GTP. Glutamate 69 lines the Mg(2+) pocket.

The protein belongs to the tubulin family. Dimer of alpha and beta chains. A typical microtubule is a hollow water-filled tube with an outer diameter of 25 nm and an inner diameter of 15 nM. Alpha-beta heterodimers associate head-to-tail to form protofilaments running lengthwise along the microtubule wall with the beta-tubulin subunit facing the microtubule plus end conferring a structural polarity. Microtubules usually have 13 protofilaments but different protofilament numbers can be found in some organisms and specialized cells. Mg(2+) is required as a cofactor.

It localises to the cytoplasm. Its subcellular location is the cytoskeleton. In terms of biological role, tubulin is the major constituent of microtubules, a cylinder consisting of laterally associated linear protofilaments composed of alpha- and beta-tubulin heterodimers. Microtubules grow by the addition of GTP-tubulin dimers to the microtubule end, where a stabilizing cap forms. Below the cap, tubulin dimers are in GDP-bound state, owing to GTPase activity of alpha-tubulin. This Onchocerca gibsoni protein is Tubulin beta chain (TBB).